Reading from the N-terminus, the 83-residue chain is Bowman-Birk type proteinase inhibitor C-II (83 aa).

Residues 1-7 (MELNLFK) constitute a propeptide that is removed on maturation. Disulfide bonds link cysteine 21/cysteine 75, cysteine 22/cysteine 37, cysteine 25/cysteine 71, cysteine 27/cysteine 35, cysteine 45/cysteine 52, cysteine 49/cysteine 64, and cysteine 54/cysteine 62.

This sequence belongs to the Bowman-Birk serine protease inhibitor family.

This Glycine max (Soybean) protein is Bowman-Birk type proteinase inhibitor C-II.